The following is a 537-amino-acid chain: [Pyruvate dehydrogenase [acetyl-transferring]]-phosphatase 1, mitochondrial (537 aa).

A mitochondrion-targeting transit peptide spans 1-71; that stretch reads MPAPTQLFFP…WWHYTQGRRY (71 aa). The PPM-type phosphatase domain maps to 109–525; sequence ILGFDSNQLP…DDITIIVVQF (417 aa). Positions 144 and 145 each coordinate Mn(2+). Lys-202 is subject to N6-acetyllysine. Positions 418 and 516 each coordinate Mn(2+).

This sequence belongs to the PP2C family. Heterodimer of a catalytic (PDP1) and a regulatory (PDPR) subunit. The cofactor is Mn(2+). Requires Mg(2+) as cofactor.

It is found in the mitochondrion. The enzyme catalyses O-phospho-L-seryl-[pyruvate dehydrogenase E1 alpha subunit] + H2O = L-seryl-[pyruvate dehydrogenase E1 alpha subunit] + phosphate. Its activity is regulated as follows. Magnesium-dependent and calcium-stimulated. PDP1 activity strongly depends on its Ca(2+)-dependent binding to the lipoyl domain of E2 subunit of component of the pyruvate dehydrogenase complex. Its function is as follows. Mitochondrial enzyme that catalyzes the dephosphorylation and concomitant reactivation of the alpha subunit of the E1 component of the pyruvate dehydrogenase complex (PDC), thereby stimulating the conversion of pyruvate into acetyl-CoA. In Pongo abelii (Sumatran orangutan), this protein is [Pyruvate dehydrogenase [acetyl-transferring]]-phosphatase 1, mitochondrial (PDP1).